We begin with the raw amino-acid sequence, 145 residues long: EDIPQPPVSQFHIQGQVYCDTCRAGFITELSEFIPGASLRLQCKDKENGDVTFTEVGYTRAEGLYSMLVERDHKNEFCEITLISSGRKDCNEIPTEGWAKPSLKFKLNTVNGTTRTVNPLGFFKKEALPKCAQVYNKLGMYPPNM.

3 disulfide bridges follow: Cys-19/Cys-90, Cys-22/Cys-131, and Cys-43/Cys-78. N-linked (GlcNAc...) (complex) asparagine; alternate glycosylation occurs at Asn-111. Asn-111 is a glycosylation site (N-linked (GlcNAc...) (high mannose) asparagine; alternate).

The protein belongs to the Ole e I family. In terms of processing, N-glycosylated; contains high mannose (Man(7)-GlcNAc) and partially fucosylated complex glycans (GlcNAc-Man(3)-Xyl-GlcNAc). Complex glycans may contribute to the antigenicity. Exists both in a glycosylated and in a non-glycosylated form. Ole e 1 and Ole e 1.0103 are the only non-glycosylated isoallergens. Post-translationally, a second potential glycosylation site exists at position 50 in cv. Bella de Espana and cv. Hojiblanca. Expressed in tapetum and pollen grains. Not detected in petals, roots or leaves.

The protein localises to the endoplasmic reticulum. It is found in the secreted. May be involved in recognition between pollen-stigma and pollen tube-style cells. The chain is Major pollen allergen Ole e 1 from Olea europaea (Common olive).